Reading from the N-terminus, the 314-residue chain is O-antigen chain rhamnosyltransferase RfbN (314 aa).

The protein belongs to the glycosyltransferase 2 family.

It carries out the reaction alpha-D-galactosyl-di-trans,octa-cis-undecaprenyl diphosphate + dTDP-beta-L-rhamnose = alpha-L-rhamnosyl-(1-&gt;3)-alpha-D-galactosyl-1-diphospho-di-trans,octa-cis-undecaprenol + dTDP + H(+). The protein operates within bacterial outer membrane biogenesis; LPS O-antigen biosynthesis. In terms of biological role, rhamnosyltransferase involved in the biosynthesis of the repeat unit of the lipopolysaccharide (LPS) O-antigen region. Catalyzes the addition of a rhamnose to the galactosyl-undecaprenyl diphosphate intermediate. This chain is O-antigen chain rhamnosyltransferase RfbN, found in Salmonella typhimurium (strain LT2 / SGSC1412 / ATCC 700720).